The primary structure comprises 426 residues: Serine hydroxymethyltransferase (426 aa).

(6S)-5,6,7,8-tetrahydrofolate-binding positions include L121 and 125–127 (GHL). K230 bears the N6-(pyridoxal phosphate)lysine mark. Residue 354–356 (SPF) coordinates (6S)-5,6,7,8-tetrahydrofolate.

The protein belongs to the SHMT family. Homodimer. The cofactor is pyridoxal 5'-phosphate.

It is found in the cytoplasm. The enzyme catalyses (6R)-5,10-methylene-5,6,7,8-tetrahydrofolate + glycine + H2O = (6S)-5,6,7,8-tetrahydrofolate + L-serine. It functions in the pathway one-carbon metabolism; tetrahydrofolate interconversion. Its pathway is amino-acid biosynthesis; glycine biosynthesis; glycine from L-serine: step 1/1. Catalyzes the reversible interconversion of serine and glycine with tetrahydrofolate (THF) serving as the one-carbon carrier. This reaction serves as the major source of one-carbon groups required for the biosynthesis of purines, thymidylate, methionine, and other important biomolecules. Also exhibits THF-independent aldolase activity toward beta-hydroxyamino acids, producing glycine and aldehydes, via a retro-aldol mechanism. The polypeptide is Serine hydroxymethyltransferase (Acaryochloris marina (strain MBIC 11017)).